Consider the following 156-residue polypeptide: Small ribosomal subunit protein uS7c (156 aa).

The protein belongs to the universal ribosomal protein uS7 family. In terms of assembly, part of the 30S ribosomal subunit.

It localises to the plastid. In terms of biological role, one of the primary rRNA binding proteins, it binds directly to 16S rRNA where it nucleates assembly of the head domain of the 30S subunit. The polypeptide is Small ribosomal subunit protein uS7c (rps7) (Prototheca wickerhamii).